We begin with the raw amino-acid sequence, 517 residues long: Alpha-amylase (517 aa).

Positions 1–21 are cleaved as a signal peptide; sequence MAHLLLAVVAITLALSQSVFG. Cysteine 52 and cysteine 108 form a disulfide bridge. Ca(2+) contacts are provided by asparagine 122, arginine 178, and aspartate 187. Residue arginine 215 participates in chloride binding. Residue aspartate 217 is the Nucleophile of the active site. Histidine 221 provides a ligand contact to Ca(2+). Glutamate 253 (proton donor) is an active-site residue. Position 355 (arginine 355) interacts with chloride. 2 cysteine pairs are disulfide-bonded: cysteine 397–cysteine 403 and cysteine 470–cysteine 482.

Belongs to the glycosyl hydrolase 13 family. In terms of assembly, monomer. It depends on Ca(2+) as a cofactor. Chloride is required as a cofactor.

It localises to the secreted. It catalyses the reaction Endohydrolysis of (1-&gt;4)-alpha-D-glucosidic linkages in polysaccharides containing three or more (1-&gt;4)-alpha-linked D-glucose units.. Its activity is regulated as follows. Activated by chloride ions. Inhibited by acarbose. Not inhibited by wheat alpha-amylase inhibitors 1 (WI-1, the tetrameric form) or 3 (WI-3, the monomeric form) and bean alpha-amylase inhibitor 1 (alphaAI-1). The protein is Alpha-amylase of Acarus siro (Flour mite).